Here is a 388-residue protein sequence, read N- to C-terminus: LL-diaminopimelate aminotransferase (388 aa).

Substrate is bound by residues tyrosine 16 and glycine 41. Pyridoxal 5'-phosphate contacts are provided by residues tyrosine 70, 104–105 (SK), tyrosine 129, asparagine 179, tyrosine 210, and 239–241 (SLS). 3 residues coordinate substrate: lysine 105, tyrosine 129, and asparagine 179. At lysine 242 the chain carries N6-(pyridoxal phosphate)lysine. Arginine 250 is a pyridoxal 5'-phosphate binding site. Residue arginine 368 participates in substrate binding.

This sequence belongs to the class-I pyridoxal-phosphate-dependent aminotransferase family. LL-diaminopimelate aminotransferase subfamily. In terms of assembly, homodimer. Requires pyridoxal 5'-phosphate as cofactor.

It carries out the reaction (2S,6S)-2,6-diaminopimelate + 2-oxoglutarate = (S)-2,3,4,5-tetrahydrodipicolinate + L-glutamate + H2O + H(+). It participates in amino-acid biosynthesis; L-lysine biosynthesis via DAP pathway; LL-2,6-diaminopimelate from (S)-tetrahydrodipicolinate (aminotransferase route): step 1/1. Its function is as follows. Involved in the synthesis of meso-diaminopimelate (m-DAP or DL-DAP), required for both lysine and peptidoglycan biosynthesis. Catalyzes the direct conversion of tetrahydrodipicolinate to LL-diaminopimelate. The protein is LL-diaminopimelate aminotransferase of Nitratidesulfovibrio vulgaris (strain DP4) (Desulfovibrio vulgaris).